The primary structure comprises 101 residues: Interleukin-8 (101 aa).

Residues 1–22 (MTSKLAVALLAAFLLSAALCEG) form the signal peptide. Citrulline is present on Arg-27. Cystine bridges form between Cys-34–Cys-61 and Cys-36–Cys-77.

The protein belongs to the intercrine alpha (chemokine CxC) family. Homodimer. Interacts with TNFAIP6 (via Link domain); this interaction interferes with chemokine binding to glycosaminoglycans. In terms of processing, citrullination at Arg-27 prevents proteolysis, and dampens tissue inflammation, it also enhances leukocytosis, possibly through impaired chemokine clearance from the blood circulation.

Its subcellular location is the secreted. Its function is as follows. Chemotactic factor that mediates inflammatory response by attracting neutrophils, basophils, and T-cells to clear pathogens and protect the host from infection. Also plays an important role in neutrophil activation. Released in response to an inflammatory stimulus, exerts its effect by binding to the G-protein-coupled receptors CXCR1 and CXCR2, primarily found in neutrophils, monocytes and endothelial cells. G-protein heterotrimer (alpha, beta, gamma subunits) constitutively binds to CXCR1/CXCR2 receptor and activation by IL8 leads to beta and gamma subunits release from Galpha (GNAI2 in neutrophils) and activation of several downstream signaling pathways including PI3K and MAPK pathways. The polypeptide is Interleukin-8 (CXCL8) (Macaca mulatta (Rhesus macaque)).